The following is a 207-amino-acid chain: Succinyl-CoA:3-ketoacid coenzyme A transferase subunit B (207 aa).

Residue Glu43 is part of the active site.

The protein belongs to the 3-oxoacid CoA-transferase subunit B family. In terms of assembly, heterodimer of a subunit A and a subunit B.

The catalysed reaction is a 3-oxo acid + succinyl-CoA = a 3-oxoacyl-CoA + succinate. The protein is Succinyl-CoA:3-ketoacid coenzyme A transferase subunit B (scoB) of Helicobacter pylori (strain ATCC 700392 / 26695) (Campylobacter pylori).